The primary structure comprises 515 residues: Putative BTB/POZ domain-containing protein At3g49970 (515 aa).

Residues 1 to 63 (MLEKLSFLLH…CYDISFEINT (63 aa)) form the BTB domain. Residues 149 to 409 (DWWADDLAVL…NSDSPAPATA (261 aa)) enclose the NPH3 domain. Tyr-350 is modified (phosphotyrosine). The disordered stretch occupies residues 395-417 (QENLSNSDSPAPATAEKTLSPPE). Residues 418 to 452 (LSSYKNELSKLNRENQYLKLELLKVKMKFKELEKE) are a coiled coil. The interval 494–515 (INPFGLKQGQTKQPKSRRHSIS) is disordered.

The protein belongs to the NPH3 family.

Its pathway is protein modification; protein ubiquitination. In terms of biological role, may act as a substrate-specific adapter of an E3 ubiquitin-protein ligase complex (CUL3-RBX1-BTB) which mediates the ubiquitination and subsequent proteasomal degradation of target proteins. The chain is Putative BTB/POZ domain-containing protein At3g49970 from Arabidopsis thaliana (Mouse-ear cress).